The following is a 473-amino-acid chain: Aspartyl/glutamyl-tRNA(Asn/Gln) amidotransferase subunit B (473 aa).

It belongs to the GatB/GatE family. GatB subfamily. Heterotrimer of A, B and C subunits.

It catalyses the reaction L-glutamyl-tRNA(Gln) + L-glutamine + ATP + H2O = L-glutaminyl-tRNA(Gln) + L-glutamate + ADP + phosphate + H(+). It carries out the reaction L-aspartyl-tRNA(Asn) + L-glutamine + ATP + H2O = L-asparaginyl-tRNA(Asn) + L-glutamate + ADP + phosphate + 2 H(+). Functionally, allows the formation of correctly charged Asn-tRNA(Asn) or Gln-tRNA(Gln) through the transamidation of misacylated Asp-tRNA(Asn) or Glu-tRNA(Gln) in organisms which lack either or both of asparaginyl-tRNA or glutaminyl-tRNA synthetases. The reaction takes place in the presence of glutamine and ATP through an activated phospho-Asp-tRNA(Asn) or phospho-Glu-tRNA(Gln). The protein is Aspartyl/glutamyl-tRNA(Asn/Gln) amidotransferase subunit B of Methanococcoides burtonii (strain DSM 6242 / NBRC 107633 / OCM 468 / ACE-M).